Here is a 367-residue protein sequence, read N- to C-terminus: Adenine deaminase (367 aa).

Residues His-19, His-21, and His-209 each coordinate Zn(2+). Glu-212 functions as the Proton donor in the catalytic mechanism. Residue Asp-290 coordinates Zn(2+). Asp-291 provides a ligand contact to substrate.

This sequence belongs to the metallo-dependent hydrolases superfamily. Adenosine and AMP deaminases family. Adenine deaminase type 2 subfamily. Requires Zn(2+) as cofactor.

It localises to the cytoplasm. The protein localises to the nucleus. It catalyses the reaction adenine + H2O + H(+) = hypoxanthine + NH4(+). Functionally, catalyzes the hydrolytic deamination of adenine to hypoxanthine. Plays an important role in the purine salvage pathway and in nitrogen catabolism. Also exhibits a low activity towards N(6)-substituted adenines that are commonly known as the plant hormones cytokinins. The chain is Adenine deaminase from Schizosaccharomyces pombe (strain 972 / ATCC 24843) (Fission yeast).